The primary structure comprises 707 residues: Protein SGM1 (707 aa).

The segment covering 1-11 (MSKKLSLEERL) has biased composition (basic and acidic residues). The interval 1–52 (MSKKLSLEERLSLATKKGRKKNKRSTSNLSSPSPVVLSNNEQESARTSIDDA) is disordered. Serine 2 is modified (N-acetylserine). Over residues 27–40 (SNLSSPSPVVLSNN) the composition is skewed to low complexity. Positions 122 to 473 (VEELVKEISP…KPHQENSNEK (352 aa)) form a coiled coil. A phosphoserine mark is found at serine 151, serine 538, serine 549, serine 568, serine 571, serine 576, and serine 589. Residues 594–706 (SAHLVNKLST…QQMVEMQGKM (113 aa)) adopt a coiled-coil conformation.

This sequence belongs to the SGM1 family. In terms of assembly, interacts with YPT6.

Its subcellular location is the golgi apparatus. Required for normal growth rate on galactose and mannose. This is Protein SGM1 (SGM1) from Saccharomyces cerevisiae (strain ATCC 204508 / S288c) (Baker's yeast).